The chain runs to 305 residues: Protoheme IX farnesyltransferase (305 aa).

9 helical membrane-spanning segments follow: residues 26 to 46 (VMSL…QPVN), 47 to 67 (PFVA…SGAL), 98 to 118 (LAVG…AANW), 119 to 139 (FAAG…TIWL), 147 to 167 (IVIG…CATG), 174 to 194 (LLMF…LALF), 220 to 240 (IFAY…TSVG), 243 to 263 (LYLA…WQIL), and 284 to 304 (LSLY…WVGG).

The protein belongs to the UbiA prenyltransferase family. Protoheme IX farnesyltransferase subfamily. Interacts with CtaA.

The protein resides in the cell inner membrane. It catalyses the reaction heme b + (2E,6E)-farnesyl diphosphate + H2O = Fe(II)-heme o + diphosphate. Its pathway is porphyrin-containing compound metabolism; heme O biosynthesis; heme O from protoheme: step 1/1. Its function is as follows. Converts heme B (protoheme IX) to heme O by substitution of the vinyl group on carbon 2 of heme B porphyrin ring with a hydroxyethyl farnesyl side group. This chain is Protoheme IX farnesyltransferase, found in Paracoccus denitrificans (strain Pd 1222).